We begin with the raw amino-acid sequence, 579 residues long: Probable serine/threonine-protein kinase kinY (579 aa).

Residues 1–24 are disordered; that stretch reads MINGEQTMVEDELPDQGKPMSDES. Residues 32–309 form the Protein kinase domain; that stretch reads LKVGESIGSG…HVLKQLTSLF (278 aa). Residues 38–46 and lysine 59 each bind ATP; that span reads IGSGAYGIV. Aspartate 167 acts as the Proton acceptor in catalysis.

The protein belongs to the protein kinase superfamily. TKL Ser/Thr protein kinase family.

The enzyme catalyses L-seryl-[protein] + ATP = O-phospho-L-seryl-[protein] + ADP + H(+). The catalysed reaction is L-threonyl-[protein] + ATP = O-phospho-L-threonyl-[protein] + ADP + H(+). The protein is Probable serine/threonine-protein kinase kinY (kinY) of Dictyostelium discoideum (Social amoeba).